The sequence spans 122 residues: Large ribosomal subunit protein uL14 (122 aa).

It belongs to the universal ribosomal protein uL14 family. In terms of assembly, part of the 50S ribosomal subunit. Forms a cluster with proteins L3 and L19. In the 70S ribosome, L14 and L19 interact and together make contacts with the 16S rRNA in bridges B5 and B8.

In terms of biological role, binds to 23S rRNA. Forms part of two intersubunit bridges in the 70S ribosome. This chain is Large ribosomal subunit protein uL14, found in Geobacter sulfurreducens (strain ATCC 51573 / DSM 12127 / PCA).